Consider the following 273-residue polypeptide: Ribosomal RNA small subunit methyltransferase A (273 aa).

Residues His10, Leu12, Gly37, Glu58, Asp83, and Asn108 each contribute to the S-adenosyl-L-methionine site.

It belongs to the class I-like SAM-binding methyltransferase superfamily. rRNA adenine N(6)-methyltransferase family. RsmA subfamily.

The protein localises to the cytoplasm. It catalyses the reaction adenosine(1518)/adenosine(1519) in 16S rRNA + 4 S-adenosyl-L-methionine = N(6)-dimethyladenosine(1518)/N(6)-dimethyladenosine(1519) in 16S rRNA + 4 S-adenosyl-L-homocysteine + 4 H(+). Specifically dimethylates two adjacent adenosines (A1518 and A1519) in the loop of a conserved hairpin near the 3'-end of 16S rRNA in the 30S particle. May play a critical role in biogenesis of 30S subunits. This Picosynechococcus sp. (strain ATCC 27264 / PCC 7002 / PR-6) (Agmenellum quadruplicatum) protein is Ribosomal RNA small subunit methyltransferase A.